The sequence spans 78 residues: Translation initiation factor IF-1 (78 aa).

Positions 1–72 (MAKEAEMEFE…TRGRITYRKI (72 aa)) constitute an S1-like domain.

It belongs to the IF-1 family. In terms of assembly, component of the 30S ribosomal translation pre-initiation complex which assembles on the 30S ribosome in the order IF-2 and IF-3, IF-1 and N-formylmethionyl-tRNA(fMet); mRNA recruitment can occur at any time during PIC assembly.

It is found in the cytoplasm. One of the essential components for the initiation of protein synthesis. Stabilizes the binding of IF-2 and IF-3 on the 30S subunit to which N-formylmethionyl-tRNA(fMet) subsequently binds. Helps modulate mRNA selection, yielding the 30S pre-initiation complex (PIC). Upon addition of the 50S ribosomal subunit IF-1, IF-2 and IF-3 are released leaving the mature 70S translation initiation complex. This Mesoplasma florum (strain ATCC 33453 / NBRC 100688 / NCTC 11704 / L1) (Acholeplasma florum) protein is Translation initiation factor IF-1.